Here is a 1131-residue protein sequence, read N- to C-terminus: Probable pre-mRNA-splicing factor ATP-dependent RNA helicase mog-1 (1131 aa).

Composition is skewed to basic and acidic residues over residues 1-12 (MSDKRADGRLEG), 65-122 (RGVT…DRSG), 139-148 (WDQDDREGSS), 160-173 (RGERDRKRYMDSER), 180-225 (RSER…WEEE), and 407-416 (GNYKESHQFA). 2 disordered regions span residues 1–225 (MSDK…WEEE) and 389–416 (MGVKEKKDETADPEDDDSGNYKESHQFA). In terms of domain architecture, Helicase ATP-binding spans 451–614 (MNVIRENNVV…FGGNCPTFTI (164 aa)). 464–471 (GETGSGKT) contacts ATP. Positions 561–564 (DEAH) match the DEAH box motif. The region spanning 629-812 (PVEDYVDAAV…NVVLLLKSLG (184 aa)) is the Helicase C-terminal domain. Composition is skewed to basic and acidic residues over residues 1085–1114 (EMREAQKEMERRKEESDKAFKRPESSRRVV) and 1121–1131 (ARSERRKLWGL). The segment at 1085 to 1131 (EMREAQKEMERRKEESDKAFKRPESSRRVVEVGSKSARSERRKLWGL) is disordered.

It belongs to the DEAD box helicase family. DEAH subfamily. PRP16 sub-subfamily.

It is found in the nucleus. The enzyme catalyses ATP + H2O = ADP + phosphate + H(+). Its function is as follows. Probable ATP-binding RNA helicase involved in pre-mRNA splicing. The chain is Probable pre-mRNA-splicing factor ATP-dependent RNA helicase mog-1 (mog-1) from Caenorhabditis elegans.